A 449-amino-acid polypeptide reads, in one-letter code: Hyaluronidase-4 (449 aa).

The N-terminal stretch at 1 to 23 (MYHIWIKFLAAWIFLKRFNGVHV) is a signal peptide. 2 disulfide bridges follow: C47/C340 and C211/C227. Residues N67, N103, and N111 are each glycosylated (N-linked (GlcNAc...) asparagine). The active-site Proton donor is E135. Residue N153 is glycosylated (N-linked (GlcNAc...) asparagine). N-linked (GlcNAc...) asparagine glycosylation occurs at N357. Intrachain disulfides connect C365/C376, C370/C427, and C429/C438. N-linked (GlcNAc...) asparagine glycosylation is present at N401. The EGF-like domain occupies 427 to 438 (CQCYQGWKGLYC).

This sequence belongs to the glycosyl hydrolase 56 family. As to quaternary structure, monomer. Expressed by the venom gland.

The protein resides in the secreted. The catalysed reaction is Random hydrolysis of (1-&gt;4)-linkages between N-acetyl-beta-D-glucosamine and D-glucuronate residues in hyaluronate.. Its function is as follows. Snake venom endo-hyaluronidase that degrades hyaluronan to smaller oligosaccharide fragments. In venom, it is not toxic by itself, but increases the diffusion of other venom proteins by degrading the extracellular matrix. In addition, it displays antiedematogenic activity. The protein is Hyaluronidase-4 of Cerastes cerastes (Horned desert viper).